A 443-amino-acid chain; its full sequence is tRNA modification GTPase MnmE (443 aa).

Residues Arg-23, Glu-82, and Lys-121 each coordinate (6S)-5-formyl-5,6,7,8-tetrahydrofolate. In terms of domain architecture, TrmE-type G spans 215–364 (GTSIVLAGHP…LKQFIQQWMQ (150 aa)). Asn-225 is a binding site for K(+). GTP contacts are provided by residues 225–230 (NAGKSS), 244–250 (TDIPGTT), and 269–272 (DSAG). Ser-229 lines the Mg(2+) pocket. Residues Thr-244, Ile-246, and Thr-249 each contribute to the K(+) site. Residue Thr-250 participates in Mg(2+) binding. Lys-443 lines the (6S)-5-formyl-5,6,7,8-tetrahydrofolate pocket.

This sequence belongs to the TRAFAC class TrmE-Era-EngA-EngB-Septin-like GTPase superfamily. TrmE GTPase family. Homodimer. Heterotetramer of two MnmE and two MnmG subunits. It depends on K(+) as a cofactor.

The protein localises to the cytoplasm. Exhibits a very high intrinsic GTPase hydrolysis rate. Involved in the addition of a carboxymethylaminomethyl (cmnm) group at the wobble position (U34) of certain tRNAs, forming tRNA-cmnm(5)s(2)U34. This Chlamydia abortus (strain DSM 27085 / S26/3) (Chlamydophila abortus) protein is tRNA modification GTPase MnmE.